A 513-amino-acid polypeptide reads, in one-letter code: Leucine-rich repeat-containing protein 24 (513 aa).

A signal peptide spans Met1–Ala20. The LRRNT domain occupies Ala21 to Pro50. 6 LRR repeats span residues Gly51 to Pro72, Ala75 to Ala96, Arg99 to Gly120, Gln123 to His144, Arg147 to Gly168, and Ser171 to Pro192. Residues Asn204–Pro259 enclose the LRRCT domain. Residues Pro260 to Leu361 enclose the Ig-like C2-type domain. An intrachain disulfide couples Cys281 to Cys345. 2 N-linked (GlcNAc...) asparagine glycosylation sites follow: Asn334 and Asn363. The disordered stretch occupies residues Ser365–Ala391. The helical transmembrane segment at Ala406–Cys426 threads the bilayer.

It localises to the membrane. The polypeptide is Leucine-rich repeat-containing protein 24 (LRRC24) (Homo sapiens (Human)).